A 666-amino-acid chain; its full sequence is Zinc finger protein 710 (666 aa).

Glycyl lysine isopeptide (Lys-Gly) (interchain with G-Cter in SUMO2) cross-links involve residues Lys110 and Lys113. A disordered region spans residues 113–141 (KAEEEEEQEVYEVSVPGDDKDPGPAEAPA). C2H2-type zinc fingers lie at residues 297–319 (WQCRMCEKSYTSKYNLVTHILGH), 325–347 (HSCPHCSKLFKQPSHLQTHLLTH), and 353–375 (HKCQVCHKAFTQTSHLKRHMLLH). Lys379 is covalently cross-linked (Glycyl lysine isopeptide (Lys-Gly) (interchain with G-Cter in SUMO2)). C2H2-type zinc fingers lie at residues 381-403 (YSCHFCGRGFAYPSELKAHEVKH), 409-431 (HVCVECGLDFSTLTQLKRHLASH), 437-459 (YQCLECDKSFHYRSQLQNHMLKH), 465-487 (FVCTECGMEFSQIHHLKQHSLTH), 493-515 (FKCEVCGREFTLQANMKRHMLIH), 521-543 (YQCHICFKTFVQKQTLKTHMIVH), 549-571 (FKCKVCGKSFNRMYNLLGHMHLH), and 577-600 (FKCPYCSSKFNLKGNLSRHMKVKH).

The protein belongs to the krueppel C2H2-type zinc-finger protein family.

It is found in the nucleus. May be involved in transcriptional regulation. The protein is Zinc finger protein 710 (Znf710) of Mus musculus (Mouse).